The chain runs to 231 residues: Ribonuclease 3 (231 aa).

One can recognise an RNase III domain in the interval 5–134 (QEKLKNDYGL…FLGALFIDQG (130 aa)). Glu47 contacts Mg(2+). The active site involves Asp51. The Mg(2+) site is built by Asn120 and Glu123. Glu123 is a catalytic residue. The region spanning 160–229 (DYKTELQEVL…AENAIKGQNH (70 aa)) is the DRBM domain.

This sequence belongs to the ribonuclease III family. As to quaternary structure, homodimer. Requires Mg(2+) as cofactor.

The protein resides in the cytoplasm. It catalyses the reaction Endonucleolytic cleavage to 5'-phosphomonoester.. In terms of biological role, digests double-stranded RNA. Involved in the processing of primary rRNA transcript to yield the immediate precursors to the large and small rRNAs (23S and 16S). Processes some mRNAs, and tRNAs when they are encoded in the rRNA operon. Processes pre-crRNA and tracrRNA of type II CRISPR loci if present in the organism. The protein is Ribonuclease 3 of Lactococcus lactis subsp. cremoris (strain SK11).